The chain runs to 121 residues: Splicing factor 3B subunit 6 (121 aa).

The tract at residues 12 to 25 (EVNRLLYVRNLPYK) is interaction with pre-mRNA branch site. Positions 15-90 (RLLYVRNLPY…RYLVVLYYQS (76 aa)) constitute an RRM domain.

It belongs to the SF3B6 family. In terms of assembly, component of splicing factor SF3B complex. Component of the U11/U12 snRNPs that are part of the U12-type spliceosome.

Its subcellular location is the nucleus. Involved in pre-mRNA splicing as a component of the splicing factor SF3B complex. SF3B complex is required for 'A' complex assembly formed by the stable binding of U2 snRNP to the branchpoint sequence (BPS) in pre-mRNA. Directly contacts the pre-mRNA branch site adenosine for the first catalytic step of splicing. Enters the spliceosome and associates with the pre-mRNA branch site as part of the 17S U2 or, in the case of the minor spliceosome, as part of the 18S U11/U12 snRNP complex, and thus may facilitate the interaction of these snRNP with the branch sites of U2 and U12 respectively. The chain is Splicing factor 3B subunit 6 from Drosophila melanogaster (Fruit fly).